We begin with the raw amino-acid sequence, 23 residues long: Gastrin-releasing peptide (23 aa).

A Methionine amide modification is found at methionine 23.

Belongs to the bombesin/neuromedin-B/ranatensin family.

The protein localises to the secreted. Its subcellular location is the cytoplasmic vesicle. It localises to the secretory vesicle lumen. Its function is as follows. Stimulates the release of gastrin and other gastrointestinal hormones. The sequence is that of Gastrin-releasing peptide (grp) from Oncorhynchus mykiss (Rainbow trout).